Here is a 542-residue protein sequence, read N- to C-terminus: Membrane protein insertase YidC (542 aa).

The next 6 membrane-spanning stretches (helical) occupy residues 6-26 (NILLIGLLFVSFLLWQQWQTD), 326-346 (LVVDYGFLWWLAIPIHWLLMF), 350-370 (FVGNWGVAIILITLTVRGMLY), 421-441 (GGCLPILLQMPIFIALYWVLL), 458-478 (LSVQDPYYVLPLLMGVSMFLM), and 501-521 (VIFTVFFLWFPAGLVLYWLVG).

The protein belongs to the OXA1/ALB3/YidC family. Type 1 subfamily. In terms of assembly, interacts with the Sec translocase complex via SecD. Specifically interacts with transmembrane segments of nascent integral membrane proteins during membrane integration.

The protein resides in the cell inner membrane. Functionally, required for the insertion and/or proper folding and/or complex formation of integral membrane proteins into the membrane. Involved in integration of membrane proteins that insert both dependently and independently of the Sec translocase complex, as well as at least some lipoproteins. Aids folding of multispanning membrane proteins. In Shewanella loihica (strain ATCC BAA-1088 / PV-4), this protein is Membrane protein insertase YidC.